The primary structure comprises 1753 residues: Negative regulator of sporulation PMD1 (1753 aa).

2 Kelch repeats span residues 143–198 (NIYI…VLNE) and 206–253 (KLII…KILV). Position 298 is a phosphothreonine (Thr298). Residues 651–664 (TTKFGNSSQSSNGS) show a composition bias toward polar residues. Disordered regions lie at residues 651 to 753 (TTKF…TTCS) and 771 to 807 (LGLS…CTLS). Residues 670–683 (SKNGNSKSNSNTSL) are compositionally biased toward low complexity. 4 stretches are compositionally biased toward polar residues: residues 690 to 699 (DFTSSTSSPK), 740 to 753 (TGTS…TTCS), 774 to 783 (SEQSGRSTRA), and 797 to 807 (NDGNDSNCTLS). Ser838 is modified (phosphoserine). Disordered regions lie at residues 875-915 (IASP…LGSS), 938-957 (PLEP…SSLA), and 962-988 (FGRD…ARRI). Low complexity predominate over residues 880 to 900 (QSRQTSFASTASTASVVSSTS). A compositionally biased stretch (pro residues) spans 938–947 (PLEPLPPVPK). A compositionally biased stretch (low complexity) spans 979-988 (KSSSSDARRI). Phosphoserine is present on residues Ser1289, Ser1307, and Ser1356. Disordered stretches follow at residues 1312–1467 (SPAT…DLDS), 1604–1686 (PIFA…NKRF), and 1706–1753 (SAVN…GKRR). Polar residues predominate over residues 1344-1379 (VSRQQNFPRRSSSFTETVPTEPTRYNYQNLDSSKSN). Positions 1399 to 1430 (NFDKYKVETLQKRNSNDGKDLDRTNDPLKNRG) are enriched in basic and acidic residues. Residues 1653-1677 (IKFSQAPSTQISPRTSVTDFTASQQ) are compositionally biased toward polar residues. The residue at position 1664 (Ser1664) is a Phosphoserine. The segment covering 1711–1723 (GRKESEGHCEDRS) has biased composition (basic and acidic residues).

It localises to the cytoplasm. In terms of biological role, negatively regulates early sporulation-specific genes. Seems to exert its function by positively regulating the Ras/cAMP pathway. Required for growth under alkaline conditions. Acts synergetically with MDS3. The sequence is that of Negative regulator of sporulation PMD1 (PMD1) from Saccharomyces cerevisiae (strain ATCC 204508 / S288c) (Baker's yeast).